A 246-amino-acid polypeptide reads, in one-letter code: Hsp70 nucleotide exchange factor fes-1 (246 aa).

Over residues glutamine 23–alanine 40 the composition is skewed to polar residues. The disordered stretch occupies residues glutamine 23–aspartate 63. ARM repeat units lie at residues threonine 48–proline 92, leucine 113–glutamine 152, glutamine 155–arginine 196, and histidine 214–lysine 244.

It belongs to the FES1 family.

The protein localises to the cytoplasm. Its function is as follows. Functions as a nucleotide exchange factor (NEF) for Hsp70 chaperones which accelerates the release of ADP. Required for fully efficient Hsp70-mediated folding of proteins. The protein is Hsp70 nucleotide exchange factor fes-1 (fes-1) of Neurospora crassa (strain ATCC 24698 / 74-OR23-1A / CBS 708.71 / DSM 1257 / FGSC 987).